A 261-amino-acid chain; its full sequence is tRNA (guanine-N(1)-)-methyltransferase (261 aa).

S-adenosyl-L-methionine is bound by residues Gly-113 and 133 to 138 (IGDYVL).

Belongs to the RNA methyltransferase TrmD family. As to quaternary structure, homodimer.

Its subcellular location is the cytoplasm. The enzyme catalyses guanosine(37) in tRNA + S-adenosyl-L-methionine = N(1)-methylguanosine(37) in tRNA + S-adenosyl-L-homocysteine + H(+). Specifically methylates guanosine-37 in various tRNAs. This chain is tRNA (guanine-N(1)-)-methyltransferase, found in Xylella fastidiosa (strain M23).